The chain runs to 216 residues: MATSRTAPTRAPSLRSSPALEASPSRTKASVGALVILAVVALCVYLMDQITKALVVSNLSEGQQVAVLGQLLQLHFVKNPGAAFSIGSGSTWIFSLVGVGVLGFVIWYAPRIRSTAWAILFGLLLGGLLGNLTDRLFREPGFGVGHVIDFLQIPLLTAIFNLADVAIVFSMGLFLLLTLRGIGLDGRRQRDEGAGVSSASPAGDESAADKPENLSA.

Residues M1–E21 are disordered. 3 helical membrane-spanning segments follow: residues V31–T51, G89–A109, and S114–D134. Active-site residues include D149 and D164. A helical membrane pass occupies residues I159–L179. The disordered stretch occupies residues Q189–A216. Residues A207–A216 show a composition bias toward basic and acidic residues.

The protein belongs to the peptidase A8 family.

The protein localises to the cell membrane. It catalyses the reaction Release of signal peptides from bacterial membrane prolipoproteins. Hydrolyzes -Xaa-Yaa-Zaa-|-(S,diacylglyceryl)Cys-, in which Xaa is hydrophobic (preferably Leu), and Yaa (Ala or Ser) and Zaa (Gly or Ala) have small, neutral side chains.. It functions in the pathway protein modification; lipoprotein biosynthesis (signal peptide cleavage). Functionally, this protein specifically catalyzes the removal of signal peptides from prolipoproteins. This is Lipoprotein signal peptidase from Leifsonia xyli subsp. xyli (strain CTCB07).